A 120-amino-acid polypeptide reads, in one-letter code: UPF0344 protein LMHCC_0278 (120 aa).

The next 4 helical transmembrane spans lie at 3 to 23 (GYIHLISWVAIVVLTVTALLI), 33 to 53 (MLQMINRVFYILVILSGIMMV), 62 to 82 (ILAIFKILMGIIVIGVVEMLL), and 92 to 112 (GMFLMIFVIVVVITISLGFYL).

It belongs to the UPF0344 family.

The protein localises to the cell membrane. This Listeria monocytogenes serotype 4a (strain HCC23) protein is UPF0344 protein LMHCC_0278.